A 426-amino-acid chain; its full sequence is Glutamate-1-semialdehyde 2,1-aminomutase (426 aa).

The residue at position 263 (lysine 263) is an N6-(pyridoxal phosphate)lysine.

The protein belongs to the class-III pyridoxal-phosphate-dependent aminotransferase family. HemL subfamily. Homodimer. Pyridoxal 5'-phosphate serves as cofactor.

Its subcellular location is the cytoplasm. The catalysed reaction is (S)-4-amino-5-oxopentanoate = 5-aminolevulinate. It functions in the pathway porphyrin-containing compound metabolism; protoporphyrin-IX biosynthesis; 5-aminolevulinate from L-glutamyl-tRNA(Glu): step 2/2. The chain is Glutamate-1-semialdehyde 2,1-aminomutase from Dichelobacter nodosus (strain VCS1703A).